Here is a 393-residue protein sequence, read N- to C-terminus: MSSIRYHSSAFDDGSFSVMARNLENMVNRANAQYVKIDKHREPYTVHYNALRDKVYSEWKESGVLGTLLKGSTLCGGYGDKLKVSMPDEFDLLIHLVFPENDKIIVKADASKKGNVILDMTKVMEIIGSQEHNKPVFDLLQKIVNKKKQLLEDKLNSLLQSIMTQTLNKMGNQIEVAGRISHLEYKKCGPAHTIFVKGPCEYSVDFVPAIRLSAAQVVLAPEQRRHFGGTLYWDAIPKPMKPAKTDNASFRASFYEAERSLLLGKQSLKPAIRLLKQNRNVKNKANLKSYHIKTLFLWQVVQQDASYWSNSPKDIFIEMLGKLADSLALTPKKGKLPFFWDPKLDMFAELTDSQRTDLFNHFRKCEYTFRKDNGNVNDCTENNVHSSFSINTR.

Glutamate 89, aspartate 91, and aspartate 205 together coordinate Mg(2+). Residue 89-91 (EFD) coordinates ATP. Residues aspartate 205 and 251–258 (RASFYEAE) each bind GTP. Residues 255–258 (YEAE), lysine 276, and 289–293 (SYHIK) contribute to the ATP site.

The protein belongs to the mab-21 family. Mg(2+) is required as a cofactor. It depends on Mn(2+) as a cofactor.

The enzyme catalyses GTP + ATP = 3',2'-cGAMP + 2 diphosphate. It carries out the reaction GTP + ATP = pppA(2'-5')pG + diphosphate. It catalyses the reaction pppA(2'-5')pG = 3',2'-cGAMP + diphosphate. The enzyme activity is specifically activated by double-stranded RNA (dsRNA). Recognizes long dsRNA (&gt;30 bp) with no preference for 5' RNA phosphorylation. Its function is as follows. Nucleotidyltransferase that catalyzes the formation of cyclic GMP-AMP (3',2'-cGAMP) from ATP and GTP and plays a key role in innate immunity. Synthesizes 3',2'-cGAMP in a two-step reaction through production of the linear intermediate pppA(2'-5')pG. Acts as a key sensor of double-stranded RNA (dsRNA), the presence of dsRNA in the cytoplasm being a danger signal that triggers the immune responses. Directly binds dsRNA longer than 35 bp, activating the nucleotidyltransferase activity, leading to synthesis of 3',2'-cGAMP, a second messenger that binds to and activates Sting, thereby triggering the antiviral immune response via activation of the NF-kappa-B transcription factor Rel (Relish). The chain is Cyclic GMP-AMP synthase-like receptor 1 from Drosophila simulans (Fruit fly).